The chain runs to 279 residues: Probable endonuclease 4 (279 aa).

9 residues coordinate Zn(2+): His66, His106, Glu142, Asp175, His178, His212, Asp225, His227, and Glu257.

Belongs to the AP endonuclease 2 family. The cofactor is Zn(2+).

It carries out the reaction Endonucleolytic cleavage to 5'-phosphooligonucleotide end-products.. Endonuclease IV plays a role in DNA repair. It cleaves phosphodiester bonds at apurinic or apyrimidinic (AP) sites, generating a 3'-hydroxyl group and a 5'-terminal sugar phosphate. In Moorella thermoacetica (strain ATCC 39073 / JCM 9320), this protein is Probable endonuclease 4.